Here is a 1043-residue protein sequence, read N- to C-terminus: Polycomb protein Pcl (1043 aa).

Disordered stretches follow at residues 1–34, 271–302, 317–346, and 395–422; these read MMNN…SAPP, PDST…PLLA, FKTV…AAPS, and KLRK…NTSP. Low complexity predominate over residues 25–34; sequence PSTAVPSAPP. Residues 324–344 show a composition bias toward pro residues; the sequence is PPTPPTPPSPPPPPPAPPVAA. One can recognise a Tudor domain in the interval 349–404; that stretch reads VTYALQEDVFIKCNDGRFYLGTIIDQTSDQYLIRFDDQSEQWCEPDKLRKLGGGSS. Residues 399 to 412 are compositionally biased toward gly residues; it reads LGGGSSITAGGGGA. 2 PHD-type zinc fingers span residues 424-472 and 512-560; these read GPMC…CAKP and QIYC…VFCC. Residues 737-757 are compositionally biased toward basic and acidic residues; that stretch reads AKKQAAQKADKHDELPLKPDL. Disordered regions lie at residues 737–819 and 931–985; these read AKKQ…TSSL and AKDL…PGHS. Over residues 783-792 the composition is skewed to basic residues; it reads SRKRKAFRLS. Residues 793–804 are compositionally biased toward basic and acidic residues; the sequence is KRYDNSRNHCDL. Serine 805 and serine 806 each carry phosphoserine. Residues 807 to 819 show a composition bias toward low complexity; sequence DENSSSSRGTSSL. Residues 945 to 954 are compositionally biased toward basic residues; sequence THGRLLRQRP. The span at 955 to 977 shows a compositional bias: low complexity; it reads QKQSPSQSRRNSTSSTATSSSSN.

Belongs to the Polycomblike family. As to quaternary structure, component of a form of the Esc/E(z) complex present specifically during early embryogenesis which is composed of Caf1-55, esc, E(z), Su(z)12, Pcl and HDAC1/Rpd3. This complex is distinct from the PRC1 complex, which contains many other PcG proteins like Pc, Ph, Psc, Su(z)2. The two complexes however cooperate and interact together during the first 3 hours of development to establish PcG silencing. Interacts with corto in vitro.

The protein resides in the nucleus. It is found in the chromosome. Polycomb group (PcG) protein. While PcG proteins are generally required to maintain the transcriptionally repressive state of homeotic genes throughout development, this protein is specifically required during the first 6 hours of embryogenesis to establish the repressed state. Component of the Esc/E(z) complex, which methylates 'Lys-9' and 'Lys-27' residues of histone H3, leading to transcriptional repression of the affected target gene. The Esc/E(z) complex is necessary but not sufficient for the repression of homeotic target genes, suggesting that the recruitment of the distinct PRC1 complex is also required. Required for the correct spatial expression of the homeotic genes of the Antennapedia and Bithorax complexes. In Drosophila melanogaster (Fruit fly), this protein is Polycomb protein Pcl (Pcl).